A 72-amino-acid polypeptide reads, in one-letter code: Alpha-conotoxin SII (72 aa).

Positions 1-21 are cleaved as a signal peptide; that stretch reads MGMRMMFTVFLLVVLATTVVS. A propeptide spanning residues 22-50 is cleaved from the precursor; sequence FPSDRASDGRDDEAKDERSDMHESDRNGR. The disordered stretch occupies residues 23-51; that stretch reads PSDRASDGRDDEAKDERSDMHESDRNGRG. A compositionally biased stretch (basic and acidic residues) spans 26-49; that stretch reads RASDGRDDEAKDERSDMHESDRNG. Intrachain disulfides connect Cys-52–Cys-68, Cys-53–Cys-58, and Cys-54–Cys-64. A propeptide spanning residues 70 to 72 is cleaved from the precursor; it reads RTL.

The protein belongs to the conotoxin A superfamily. In terms of processing, the disulfide bond Cys-52-Cys-68 (Cys I-VI), which corresponds to an extra disulfide bond when compared to the cysteine framework I (CC-C-C), does contribute to conotoxin SII stability and imparts a unique binding mode at the nAChR. As to expression, expressed by the venom duct.

It localises to the secreted. Alpha-conotoxins act on postsynaptic membranes, they bind to the nicotinic acetylcholine receptors (nAChR) and thus inhibit them. This toxin potently inhibits the rodent muscle nAChR (IC(50)=120 nM (adult subtype, alpha-1-beta-1-delta-epsilon/CHRNA1-CHRNB1-CHRND-CHRNE) and IC(50)=370 nM (fetal subtype, alpha-1-beta-1-gamma-delta/CHRNA1-CHRNB1-CHRNG-CHRND)) and weakly inhibits neuronal nAChRs. In contrast to alpha-conotoxins bearing 2 disulfide bonds (framework I), this conotoxin acts via a unique binding mode with the helix and the N- and C-termini buried in the binding pocket of muscle nAChRs. This chain is Alpha-conotoxin SII, found in Conus striatus (Striated cone).